We begin with the raw amino-acid sequence, 38 residues long: Photosystem II reaction center protein L (38 aa).

A helical transmembrane segment spans residues 17-37; that stretch reads SLFWGLLLIFVLAVLFSSYFF.

It belongs to the PsbL family. In terms of assembly, PSII is composed of 1 copy each of membrane proteins PsbA, PsbB, PsbC, PsbD, PsbE, PsbF, PsbH, PsbI, PsbJ, PsbK, PsbL, PsbM, PsbT, PsbX, PsbY, PsbZ, Psb30/Ycf12, at least 3 peripheral proteins of the oxygen-evolving complex and a large number of cofactors. It forms dimeric complexes.

It localises to the plastid. It is found in the chloroplast thylakoid membrane. In terms of biological role, one of the components of the core complex of photosystem II (PSII). PSII is a light-driven water:plastoquinone oxidoreductase that uses light energy to abstract electrons from H(2)O, generating O(2) and a proton gradient subsequently used for ATP formation. It consists of a core antenna complex that captures photons, and an electron transfer chain that converts photonic excitation into a charge separation. This subunit is found at the monomer-monomer interface and is required for correct PSII assembly and/or dimerization. The chain is Photosystem II reaction center protein L from Gracilaria tenuistipitata var. liui (Red alga).